We begin with the raw amino-acid sequence, 1233 residues long: Hemocyanin A-type, units Ode to Odg (1233 aa).

The interval 1–4 is ODD; it reads EGNE. The ODE stretch occupies residues 5-422; the sequence is YLVRKNVERL…KQDADIDIPL (418 aa). Residue H45 coordinates Cu cation. A disulfide bond links C51 and C62. A cross-link (2'-(S-cysteinyl)-histidine (Cys-His)) is located at residues 63–65; that stretch reads CLH. Cu cation is bound by residues H65, H74, H186, H190, and H217. 2 disulfides stabilise this stretch: C176/C243 and C334/C340. A glycan (N-linked (GlcNAc...) asparagine) is linked at N392. The segment at 423-839 is ODF; the sequence is NHIRRNVESL…KEIEKEAVRG (417 aa). H463 contacts Cu cation. An intrachain disulfide couples C468 to C478. A cross-link (2'-(S-cysteinyl)-histidine (Cys-His)) is located at residues 479-481; the sequence is CLH. The Cu cation site is built by H481 and H490. N538 is a glycosylation site (N-linked (GlcNAc...) asparagine). 2 cysteine pairs are disulfide-bonded: C589–C656 and C743–C748. The Cu cation site is built by H599, H603, and H630. Residues 840–1233 are ODG; the sequence is TIIRKNVNSL…VFLAPAKTTH (394 aa). A Cu cation-binding site is contributed by H880. C886 and C896 form a disulfide bridge. N-linked (GlcNAc...) asparagine glycosylation occurs at N890. A cross-link (2'-(S-cysteinyl)-histidine (Cys-His)) is located at residues 897-899; that stretch reads CQH. 5 residues coordinate Cu cation: H899, H908, H1008, H1012, and H1039. Disulfide bonds link C998–C1065 and C1152–C1158.

Belongs to the tyrosinase family. Hemocyanin subfamily. In terms of assembly, decamers of large identical subunits (350 kDa), each containing 7 globular oxygen-binding domains: ODA, ODB, ODC, ODD, ODE, ODF, and ODG. The cofactor is Cu(2+).

Functionally, hemocyanins are copper-containing oxygen carriers occurring freely dissolved in the hemolymph of many mollusks and arthropods. This Enteroctopus dofleini (North Pacific giant octopus) protein is Hemocyanin A-type, units Ode to Odg.